The following is a 210-amino-acid chain: Syntaxin-binding protein 6 (210 aa).

Ser-2 carries the N-acetylserine modification. In terms of domain architecture, v-SNARE coiled-coil homology spans 151–210 (GNSILHSAADSVTSAVQKASQALNERGERLGRAEEKTEDLKNSAQQFAETAHKLAMKHKC).

Part of a ternary complex containing SNAP25 and STX1A that can be dissociated by NAPA and NSF. Interacts with STX4A.

The protein localises to the cytoplasm. It localises to the membrane. In terms of biological role, forms non-fusogenic complexes with SNAP25 and STX1A and may thereby modulate the formation of functional SNARE complexes and exocytosis. The polypeptide is Syntaxin-binding protein 6 (STXBP6) (Bos taurus (Bovine)).